The sequence spans 2150 residues: MGAQVSRQNVGTHSTQNSVSNGSSLNYFNINYFKDAASNGASKLEFTQDPSKFTDPVKDVLEKGIPTLQSPTVEACGYSDRIIQITRGDSTITSQDVANAIVAYGVWPHYLSSKDASAIDKPSQPDTSSNRFYTLRSVTWSSSSKGWWWKLPDALKDMGIFGENMFYHYLGRSGYTIHVQCNASKFHQGTLIVALIPEHQIASALHGNVNVGYNYTHPGETGREVKAETRLNPDLQPTEEYWLNFDGTLLGNITIFPHQFINLRSNNSATIIAPYVNAVPMDSMRSHNNWSLVIIPICPLETSSAINTIPITISISPMCAEFSGARAKRQGLPVFITPGSGQFLTTDDFQSPCALPWYHPTKEISIPGEVKNLVEICQVDSLVPINNTDTYINSENMYSVVLQSSINAPDKIFSIRTDVASQPLATTLIGEISSYFTHWTGSLRFSFMFCGTANTTVKLLLAYTPPGIAEPTTRKDAMLGTHVIWDVGLQSTISMVVPWISASHYRNTSPGRSTSGYITCWYQTRLVIPPQTPPTARLLCFVSGCKDFCLRMARDTNLHLQSGAIAQNPVENYIDEVLNEVLVVPNINSSNPTTSNSAPALDAAETGHTSSVQPEDVIETRYVQTSQTRDEMSLESFLGRSGCIHESKLEVTLANYNKENFTVWAINLQEMAQIRRKFELFTYTRFDSEITLVPCISALSQDIGHITMQYMYVPPGAPVPNSRDDYAWQSGTNASVFWQHGQAYPRFSLPFLSVASAYYMFYDGYDEQDQNYGTANTNNMGSLCSRIVTEKHIHKVHIMTRIYHKAKHVKAWCPRPPRALEYTRAHRTNFKIEDRSIQTAIVTRPIITTAGPSDMYVHVGNLIYRNLHLFNSEMHESILVSYSSDLIIYRTNTVGDDYIPSCDCTQATYYCKHKNRYFPITVTSHDWYEIQESEYYPKHIQYNLLIGEGPCEPGDCGGKLLCKHGVIGIVTAGGDNHVAFIDLRHFHCAEEQGVTDYIHMLGEAFGNGFVDSVKEHIHAINPVGNISKKIIKWMLRIISAMVIIIRNSSDPQTILATLTLIGCSGSPWRFLKEKFCKWTQLNYIHKESDSWLKKFTEACNAARGLEWIGNKISKFIEWMKSMLPQAQLKVKYLNELKKLNLYEKQVESLRVADMKTQEKIKMEIDTLHDLSRKFLPLYASEAKRIKTLYIKCDNIIKQKKRCEPVAIVIHGPPGAGKSITTNFLAKMITNDSDIYSLPPDPKYFDGYDQQSVVIMDDIMQNPAGDDMTLFCQMVSSVTFIPPMADLPDKGKAFDSRFVLCSTNHSLLTPPTITSLPAMNRRFFLDLDIIVHDNFKDPQGKLNVAAAFRPCDVDNRIGNARCCPFVCGKAVSFKDRNSCNKYSLAQVYNIMIEEDRRRRQVVDVMTAIFQGPIDMKNPPPPAITDLLQSVRTPEVIKYCEGNRWIIPAECKIEKELNLANTIITIIANVIGMARIIYVIYKLFCTLQGPYSGEPKPKTKIPERRVVTQGPEEEFGMSLIKHNSCVITTENGKFTGLGVYDRFVVVPTHADPGKEIQVDGITTKVIDSYDLYNKNGIKLEITVLKLDRNEKFRDIRRYIPNNEDDYPNCNLALLANQPEPTIINVGDVVSYGNILLSGNQTARMLKYSYPTKSGYCGGVLYKIGQVLGIHVGGNGRDGFSAMLLRSYFTDVQGQITLSKKTSECNLPSIHTPCKTKLQPSVFYDVFPGSKEPAVLSEKDARLQVDFNEALFSKYKGNTDCSINDHIRIASSHYAAQLITLDIDPKPITLEDSVFGTDGLEALDLNTSAGFPYIAMGVKKRDLINNKTKDISKLKEAIDKYGVDLPMVTFLKDELRKHEKVIKGKTRVIEASSVNDTLLFRTTFGNLFSKFHLNPGIVTGSAVGCDPEVFWSKIPAMLDDKCIMAFDYTNYDGSIHPIWFEALKQVLVDLSFNPTLIDRLCKSKHIFKNTYYEVEGGVPSGCSGTSIFNTMINNIIIRTLVLDAYKNIDLDKLKIIAYGDDVIFSYIHELDMEAIAIEGVKYGLTITPADKSNTFVKLDYSNVTFLKRGFKQDEKYNFLIHPTFPEDEIFESIRWTKKPSQMHEHVLSLCHLMWHNGRDAYKKFVEKIRSVSAGRALYIPPYDLLLHEWYEKF.

G2 is lipidated: N-myristoyl glycine; by host. The Cytoplasmic segment spans residues 2 to 1463 (GAQVSRQNVG…ELNLANTIIT (1462 aa)). An amphipathic alpha-helix region spans residues 565 to 581 (IAQNPVENYIDEVLNEV). Residues 592–611 (PTTSNSAPALDAAETGHTSS) form a disordered region. Catalysis depends on for protease 2A activity residues H868 and D885. Zn(2+)-binding residues include C902 and C904. C956 acts as the For protease 2A activity in catalysis. The Zn(2+) site is built by C962 and H964. The tract at residues 1088–1157 (SDSWLKKFTE…SLRVADMKTQ (70 aa)) is membrane-binding. The segment at 1088–1221 (SDSWLKKFTE…PPGAGKSITT (134 aa)) is oligomerization. Residues 1109-1113 (GNKIS) are RNA-binding. Positions 1181 to 1343 (EAKRIKTLYI…FKDPQGKLNV (163 aa)) constitute an SF3 helicase domain. 3 residues coordinate Zn(2+): C1350, C1361, and C1366. The segment at 1350-1366 (CDVDNRIGNARCCPFVC) adopts a C4-type; degenerate zinc-finger fold. The interval 1393-1400 (EDRRRRQV) is RNA-binding. Residues 1404–1409 (MTAIFQ) are oligomerization. An intramembrane segment occupies 1464–1479 (IIANVIGMARIIYVIY). Topologically, residues 1480–2150 (KLFCTLQGPY…LLLHEWYEKF (671 aa)) are cytoplasmic. O-(5'-phospho-RNA)-tyrosine is present on Y1489. The region spanning 1508–1686 (GPEEEFGMSL…FSAMLLRSYF (179 aa)) is the Peptidase C3 domain. Active-site for protease 3C activity residues include H1547, E1578, and C1654. The RdRp catalytic domain maps to 1918–2031 (KCIMAFDYTN…SYIHELDMEA (114 aa)). Residues D1924 and D2017 each contribute to the Mg(2+) site.

This sequence belongs to the picornaviruses polyprotein family. As to quaternary structure, interacts with capsid protein VP1 and capsid protein VP3 to form heterotrimeric protomers. In terms of assembly, interacts with capsid protein VP0, and capsid protein VP3 to form heterotrimeric protomers. Five protomers subsequently associate to form pentamers which serve as building blocks for the capsid. Interacts with capsid protein VP2, capsid protein VP3 and capsid protein VP4 following cleavage of capsid protein VP0. Interacts with capsid protein VP1 and capsid protein VP3 in the mature capsid. As to quaternary structure, interacts with capsid protein VP0 and capsid protein VP1 to form heterotrimeric protomers. Five protomers subsequently associate to form pentamers which serve as building blocks for the capsid. Interacts with capsid protein VP4 in the mature capsid. Interacts with protein 2C; this interaction may be important for virion morphogenesis. In terms of assembly, interacts with capsid protein VP1 and capsid protein VP3. Homodimer. As to quaternary structure, homohexamer; forms a hexameric ring structure with 6-fold symmetry characteristic of AAA+ ATPases. Interacts (via N-terminus) with host RTN3 (via reticulon domain); this interaction is important for viral replication. Interacts with capsid protein VP3; this interaction may be important for virion morphogenesis. In terms of assembly, interacts with protein 3CD. Homodimer. Interacts with host GBF1. Interacts (via GOLD domain) with host ACBD3 (via GOLD domain); this interaction allows the formation of a viral protein 3A/ACBD3 heterotetramer with a 2:2 stoichiometry, which will stimulate the recruitment of host PI4KB in order to synthesize PI4P at the viral RNA replication sites. As to quaternary structure, interacts with RNA-directed RNA polymerase. In terms of assembly, interacts with protein 3AB and with RNA-directed RNA polymerase. Interacts with Viral protein genome-linked and with protein 3CD. It depends on Mg(2+) as a cofactor. In terms of processing, specific enzymatic cleavages in vivo by the viral proteases yield processing intermediates and the mature proteins. Myristoylation is required for the formation of pentamers during virus assembly. Further assembly of 12 pentamers and a molecule of genomic RNA generates the provirion. Post-translationally, during virion maturation, immature virions are rendered infectious following cleavage of VP0 into VP4 and VP2. This maturation seems to be an autocatalytic event triggered by the presence of RNA in the capsid and it is followed by a conformational change infectious virion. In terms of processing, myristoylation is required during RNA encapsidation and formation of the mature virus particle. VPg is uridylylated by the polymerase into VPg-pUpU. This acts as a nucleotide-peptide primer for the genomic RNA replication.

It localises to the virion. The protein resides in the host cytoplasm. The protein localises to the host cytoplasmic vesicle membrane. It is found in the host nucleus. It carries out the reaction a ribonucleoside 5'-triphosphate + H2O = a ribonucleoside 5'-diphosphate + phosphate + H(+). The catalysed reaction is Selective cleavage of Tyr-|-Gly bond in the picornavirus polyprotein.. It catalyses the reaction RNA(n) + a ribonucleoside 5'-triphosphate = RNA(n+1) + diphosphate. The enzyme catalyses Selective cleavage of Gln-|-Gly bond in the poliovirus polyprotein. In other picornavirus reactions Glu may be substituted for Gln, and Ser or Thr for Gly.. With respect to regulation, replication or transcription is subject to high level of random mutations by the nucleotide analog ribavirin. Functionally, forms an icosahedral capsid of pseudo T=3 symmetry with capsid proteins VP2 and VP3. The capsid is 300 Angstroms in diameter, composed of 60 copies of each capsid protein and enclosing the viral positive strand RNA genome. Capsid protein VP1 mainly forms the vertices of the capsid. Capsid protein VP1 interacts with host cell receptor to provide virion attachment to target host cells. This attachment induces virion internalization. Tyrosine kinases are probably involved in the entry process. After binding to its receptor, the capsid undergoes conformational changes. Capsid protein VP1 N-terminus (that contains an amphipathic alpha-helix) and capsid protein VP4 are externalized. Together, they shape a pore in the host membrane through which viral genome is translocated to host cell cytoplasm. Forms an icosahedral capsid of pseudo T=3 symmetry with capsid proteins VP2 and VP3. The capsid is 300 Angstroms in diameter, composed of 60 copies of each capsid protein and enclosing the viral positive strand RNA genome. In terms of biological role, lies on the inner surface of the capsid shell. After binding to the host receptor, the capsid undergoes conformational changes. Capsid protein VP4 is released, Capsid protein VP1 N-terminus is externalized, and together, they shape a pore in the host membrane through which the viral genome is translocated into the host cell cytoplasm. Its function is as follows. Component of immature procapsids, which is cleaved into capsid proteins VP4 and VP2 after maturation. Allows the capsid to remain inactive before the maturation step. Functionally, cysteine protease that cleaves viral polyprotein and specific host proteins. It is responsible for the autocatalytic cleavage between the P1 and P2 regions, which is the first cleavage occurring in the polyprotein. Also cleaves the host translation initiation factor EIF4G1, in order to shut down the capped cellular mRNA translation. Inhibits the host nucleus-cytoplasm protein and RNA trafficking by cleaving host members of the nuclear pores. Counteracts stress granule formation probably by antagonizing its assembly or promoting its dissassembly. Plays an essential role in the virus replication cycle by acting as a viroporin. Creates a pore in the host endoplasmic reticulum and as a consequence releases Ca2+ in the cytoplasm of infected cell. In turn, high levels of cytoplasmic calcium may trigger membrane trafficking and transport of viral ER-associated proteins to viroplasms, sites of viral genome replication. In terms of biological role, induces and associates with structural rearrangements of intracellular membranes. Displays RNA-binding, nucleotide binding and NTPase activities. May play a role in virion morphogenesis and viral RNA encapsidation by interacting with the capsid protein VP3. Its function is as follows. Localizes the viral replication complex to the surface of membranous vesicles. Together with protein 3CD binds the Cis-Active RNA Element (CRE) which is involved in RNA synthesis initiation. Acts as a cofactor to stimulate the activity of 3D polymerase, maybe through a nucleid acid chaperone activity. Functionally, localizes the viral replication complex to the surface of membranous vesicles. It inhibits host cell endoplasmic reticulum-to-Golgi apparatus transport and causes the disassembly of the Golgi complex, possibly through GBF1 interaction. This would result in depletion of MHC, trail receptors and IFN receptors at the host cell surface. Plays an essential role in viral RNA replication by recruiting ACBD3 and PI4KB at the viral replication sites, thereby allowing the formation of the rearranged membranous structures where viral replication takes place. Acts as a primer for viral RNA replication and remains covalently bound to viral genomic RNA. VPg is uridylylated prior to priming replication into VPg-pUpU. The oriI viral genomic sequence may act as a template for this. The VPg-pUpU is then used as primer on the genomic RNA poly(A) by the RNA-dependent RNA polymerase to replicate the viral genome. During genome replication, the VPg-RNA linkage is removed by the host TDP2, thereby accelerating replication. During the late stage of the replication cycle, host TDP2 is excluded from sites of viral RNA synthesis and encapsidation, allowing for the generation of progeny virions. In terms of biological role, involved in the viral replication complex and viral polypeptide maturation. It exhibits protease activity with a specificity and catalytic efficiency that is different from protease 3C. Protein 3CD lacks polymerase activity. Protein 3CD binds to the 5'UTR of the viral genome. Its function is as follows. Replicates the viral genomic RNA on the surface of intracellular membranes. May form linear arrays of subunits that propagate along a strong head-to-tail interaction called interface-I. Covalently attaches UMP to a tyrosine of VPg, which is used to prime RNA synthesis. The positive stranded RNA genome is first replicated at virus induced membranous vesicles, creating a dsRNA genomic replication form. This dsRNA is then used as template to synthesize positive stranded RNA genomes. ss(+)RNA genomes are either translated, replicated or encapsidated. Functionally, major viral protease that mediates proteolytic processing of the polyprotein. Cleaves host EIF5B, contributing to host translation shutoff. Also cleaves host PABPC1, contributing to host translation shutoff. Cleaves host NLRP1, triggers host N-glycine-mediated degradation of the autoinhibitory NLRP1 N-terminal fragment. The sequence is that of Genome polyprotein from Homo sapiens (Human).